Reading from the N-terminus, the 435-residue chain is MTMASKSDSTHDESGDEAADSTEPESALETARRQLYHAASYLDIDQNIVERLKYPKKVHEVTIPIERDDGTVEVFTGYRAQHDSVRGPYKGGLRYHPDVTRDECVGLGMWMTWKCAVMDLPFGGAKGGVAVNPKELSPEEKERLTRRFTQEIRDVIGPNQDIPAPDMGTDPQTMAWLMDAYSMQEGETTPGVVTGKPPVVGGSEGREEAPGRSVAIITQLVCEYYDQPLDETTVAVQGYGSVGANAARLLDKWGATIVAISDVNGAMYEPDGIDTASVPSHDEEPEAVTTYADTVISNEELLTLDVDVLIPAALGNVITKENAEAIAADLVVEGANGPTTSTADSILADRDVAVIPDILANAGGVTVSYFEWLQDINRRAWSLERVNDELEAEMQAAWRAVKDEYENRDVTWRDAAYIVALSRIAEAHEARGLWP.

Residues 1-28 (MTMASKSDSTHDESGDEAADSTEPESAL) are disordered. A compositionally biased stretch (acidic residues) spans 14-23 (SGDEAADSTE). Lys-126 is a catalytic residue.

It belongs to the Glu/Leu/Phe/Val dehydrogenases family. As to quaternary structure, homohexamer. Post-translationally, the N-terminus is blocked.

It catalyses the reaction L-glutamate + NAD(+) + H2O = 2-oxoglutarate + NH4(+) + NADH + H(+). Its activity is regulated as follows. Inhibited by ethanol, acetone, acetonitrile and 2-propanol (65 to 70% inhibition) and to a lesser extent by methanol and dimethyl formamide (26 and 49 % inhibition respectively). No effect of glycerol or DMSO. The polypeptide is NAD-specific glutamate dehydrogenase A (gdhX) (Halobacterium salinarum (Halobacterium halobium)).